The sequence spans 353 residues: Heterogeneous nuclear ribonucleoprotein D0 (353 aa).

The segment at 1–89 (MSEEQFGGDG…SSPRHTEAAT (89 aa)) is disordered. An N-acetylserine modification is found at serine 2. Positions 11 to 42 (AAAAATAAVGGSAGEQEGAMVAAAQGAAAAAG) are enriched in low complexity. Residues 43–56 (SGSGGGSAPGGTEG) are compositionally biased toward gly residues. Basic and acidic residues predominate over residues 62–71 (EGAKIDASKN). Serine 69 carries the phosphoserine modification. Lysine 70 participates in a covalent cross-link: Glycyl lysine isopeptide (Lys-Gly) (interchain with G-Cter in SUMO2). Serine 78, serine 80, and serine 81 each carry phosphoserine. Position 89 is a phosphothreonine (threonine 89). 2 RRM domains span residues 95-177 (WKMF…KTKE) and 180-259 (KKIF…MSKE). Lysine 117 is modified (N6-methyllysine). A Phosphothreonine modification is found at threonine 125. Lysine 127 participates in a covalent cross-link: Glycyl lysine isopeptide (Lys-Gly) (interchain with G-Cter in SUMO2). Lysine 163 carries the N6-acetyllysine modification. Serine 188 carries the phosphoserine modification. Threonine 191 carries the phosphothreonine modification. Residue lysine 195 forms a Glycyl lysine isopeptide (Lys-Gly) (interchain with G-Cter in SUMO2) linkage. An N6-acetyllysine mark is found at lysine 241 and lysine 249. Phosphoserine is present on serine 269. Omega-N-methylarginine is present on residues arginine 270, arginine 276, arginine 278, and arginine 280. An Asymmetric dimethylarginine; alternate modification is found at arginine 343. Dimethylated arginine; alternate is present on arginine 343. Arginine 343 is subject to Omega-N-methylarginine; alternate.

Identified in a IGF2BP1-dependent mRNP granule complex containing untranslated mRNAs. Part of a complex associated with the FOS mCRD domain and consisting of PABPC1, PAIP1, CSDE1/UNR and SYNCRIP. Interacts with IGF2BP2. Interacts with GTPBP1. Interacts with EIF4G1; the interaction requires RNA. Interacts with EIF3B and RPS3. In terms of processing, methylated by PRMT1, in an insulin-dependent manner. The PRMT1-mediated methylation regulates its phosphorylation. Arg-343 is dimethylated, probably to asymmetric dimethylarginine.

The protein localises to the nucleus. It localises to the cytoplasm. Functionally, binds with high affinity to RNA molecules that contain AU-rich elements (AREs) found within the 3'-UTR of many proto-oncogenes and cytokine mRNAs. Also binds to double- and single-stranded DNA sequences in a specific manner and functions a transcription factor. Each of the RNA-binding domains specifically can bind solely to a single-stranded non-monotonous 5'-UUAG-3' sequence and also weaker to the single-stranded 5'-TTAGGG-3' telomeric DNA repeat. Binds RNA oligonucleotides with 5'-UUAGGG-3' repeats more tightly than the telomeric single-stranded DNA 5'-TTAGGG-3' repeats. Binding of RRM1 to DNA inhibits the formation of DNA quadruplex structure which may play a role in telomere elongation. May be involved in translationally coupled mRNA turnover. Implicated with other RNA-binding proteins in the cytoplasmic deadenylation/translational and decay interplay of the FOS mRNA mediated by the major coding-region determinant of instability (mCRD) domain. May play a role in the regulation of the rhythmic expression of circadian clock core genes. Directly binds to the 3'UTR of CRY1 mRNA and induces CRY1 rhythmic translation. May also be involved in the regulation of PER2 translation. This chain is Heterogeneous nuclear ribonucleoprotein D0 (Hnrnpd), found in Rattus norvegicus (Rat).